A 278-amino-acid chain; its full sequence is Pyrroline-5-carboxylate reductase (278 aa).

The protein belongs to the pyrroline-5-carboxylate reductase family.

The protein resides in the cytoplasm. It catalyses the reaction L-proline + NADP(+) = (S)-1-pyrroline-5-carboxylate + NADPH + 2 H(+). The catalysed reaction is L-proline + NAD(+) = (S)-1-pyrroline-5-carboxylate + NADH + 2 H(+). Its pathway is amino-acid biosynthesis; L-proline biosynthesis; L-proline from L-glutamate 5-semialdehyde: step 1/1. In Actinidia chinensis var. chinensis (Chinese soft-hair kiwi), this protein is Pyrroline-5-carboxylate reductase.